The primary structure comprises 271 residues: Phosphate import ATP-binding protein PstB 1 (271 aa).

Positions 24-266 (MIGKDVSVYY…PDDPRTQDYI (243 aa)) constitute an ABC transporter domain. Residue 56–63 (GPSGCGKS) participates in ATP binding.

It belongs to the ABC transporter superfamily. Phosphate importer (TC 3.A.1.7) family. As to quaternary structure, the complex is composed of two ATP-binding proteins (PstB), two transmembrane proteins (PstC and PstA) and a solute-binding protein (PstS).

It is found in the cell inner membrane. It carries out the reaction phosphate(out) + ATP + H2O = ADP + 2 phosphate(in) + H(+). Its function is as follows. Part of the ABC transporter complex PstSACB involved in phosphate import. Responsible for energy coupling to the transport system. The sequence is that of Phosphate import ATP-binding protein PstB 1 from Rhizobium johnstonii (strain DSM 114642 / LMG 32736 / 3841) (Rhizobium leguminosarum bv. viciae).